The following is a 110-amino-acid chain: Small ribosomal subunit protein bS16 (110 aa).

A disordered region spans residues 84–110; it reads KRAPRNNPEKAVPRKERKAAAEAAAKA. Over residues 90–103 the composition is skewed to basic and acidic residues; sequence NPEKAVPRKERKAA.

It belongs to the bacterial ribosomal protein bS16 family.

The sequence is that of Small ribosomal subunit protein bS16 from Afipia carboxidovorans (strain ATCC 49405 / DSM 1227 / KCTC 32145 / OM5) (Oligotropha carboxidovorans).